Reading from the N-terminus, the 282-residue chain is MKALEVDNAQNIRTAFFISDGTAITAETLGRAILSQFASVPFETRVLPYVDNLERAEDAVVQINTAYQRDGLLPLVFDTIVSPEIREKINSAHSCNLDMYEGLIGRVAEETGVEPDGHSGHAHDNVDSETYKERIDAVHFALDNDDGARTRHYHAADIILIGVSRSGKTPTSLYLALQFGIRAANYPLTEEDLNDNQLPKALREHKHKLFGLIIDTDRLVKIRQERRAGSRYSSYQQCQQEQRAIQGIYTSQGIPSLDVSEMSVEEIATRILQMTGLKRRIG.

An ADP-binding site is contributed by 162–169 (GVSRSGKT).

Belongs to the pyruvate, phosphate/water dikinase regulatory protein family. PSRP subfamily.

It catalyses the reaction [pyruvate, water dikinase] + ADP = [pyruvate, water dikinase]-phosphate + AMP + H(+). The catalysed reaction is [pyruvate, water dikinase]-phosphate + phosphate + H(+) = [pyruvate, water dikinase] + diphosphate. In terms of biological role, bifunctional serine/threonine kinase and phosphorylase involved in the regulation of the phosphoenolpyruvate synthase (PEPS) by catalyzing its phosphorylation/dephosphorylation. In Psychrobacter arcticus (strain DSM 17307 / VKM B-2377 / 273-4), this protein is Putative phosphoenolpyruvate synthase regulatory protein.